The following is a 408-amino-acid chain: Phosphopentomutase (408 aa).

Asp-10, Asp-307, His-312, Asp-348, His-349, and His-360 together coordinate Mn(2+).

Belongs to the phosphopentomutase family. The cofactor is Mn(2+).

The protein resides in the cytoplasm. It carries out the reaction 2-deoxy-alpha-D-ribose 1-phosphate = 2-deoxy-D-ribose 5-phosphate. The catalysed reaction is alpha-D-ribose 1-phosphate = D-ribose 5-phosphate. The protein operates within carbohydrate degradation; 2-deoxy-D-ribose 1-phosphate degradation; D-glyceraldehyde 3-phosphate and acetaldehyde from 2-deoxy-alpha-D-ribose 1-phosphate: step 1/2. Isomerase that catalyzes the conversion of deoxy-ribose 1-phosphate (dRib-1-P) and ribose 1-phosphate (Rib-1-P) to deoxy-ribose 5-phosphate (dRib-5-P) and ribose 5-phosphate (Rib-5-P), respectively. The polypeptide is Phosphopentomutase (Proteus mirabilis (strain HI4320)).